Consider the following 118-residue polypeptide: Small ribosomal subunit protein uS13 (118 aa).

Residues 91 to 118 form a disordered region; the sequence is HRRSLPLRGQRTKNNARTRKGPKKPIKR.

This sequence belongs to the universal ribosomal protein uS13 family. As to quaternary structure, part of the 30S ribosomal subunit. Forms a loose heterodimer with protein S19. Forms two bridges to the 50S subunit in the 70S ribosome.

In terms of biological role, located at the top of the head of the 30S subunit, it contacts several helices of the 16S rRNA. In the 70S ribosome it contacts the 23S rRNA (bridge B1a) and protein L5 of the 50S subunit (bridge B1b), connecting the 2 subunits; these bridges are implicated in subunit movement. Contacts the tRNAs in the A and P-sites. This chain is Small ribosomal subunit protein uS13, found in Hydrogenovibrio crunogenus (strain DSM 25203 / XCL-2) (Thiomicrospira crunogena).